Consider the following 236-residue polypeptide: 2-C-methyl-D-erythritol 4-phosphate cytidylyltransferase (236 aa).

The protein belongs to the IspD/TarI cytidylyltransferase family. IspD subfamily. In terms of assembly, homodimer.

The enzyme catalyses 2-C-methyl-D-erythritol 4-phosphate + CTP + H(+) = 4-CDP-2-C-methyl-D-erythritol + diphosphate. The protein operates within isoprenoid biosynthesis; isopentenyl diphosphate biosynthesis via DXP pathway; isopentenyl diphosphate from 1-deoxy-D-xylulose 5-phosphate: step 2/6. Functionally, catalyzes the formation of 4-diphosphocytidyl-2-C-methyl-D-erythritol from CTP and 2-C-methyl-D-erythritol 4-phosphate (MEP). The polypeptide is 2-C-methyl-D-erythritol 4-phosphate cytidylyltransferase (Enterobacter sp. (strain 638)).